A 260-amino-acid chain; its full sequence is 3-methyl-2-oxobutanoate hydroxymethyltransferase (260 aa).

2 residues coordinate Mg(2+): D44 and D83. 3-methyl-2-oxobutanoate-binding positions include 44 to 45, D83, and K113; that span reads DS. E115 contributes to the Mg(2+) binding site. E183 functions as the Proton acceptor in the catalytic mechanism.

Belongs to the PanB family. As to quaternary structure, homodecamer; pentamer of dimers. Requires Mg(2+) as cofactor.

It is found in the cytoplasm. The enzyme catalyses 3-methyl-2-oxobutanoate + (6R)-5,10-methylene-5,6,7,8-tetrahydrofolate + H2O = 2-dehydropantoate + (6S)-5,6,7,8-tetrahydrofolate. The protein operates within cofactor biosynthesis; (R)-pantothenate biosynthesis; (R)-pantoate from 3-methyl-2-oxobutanoate: step 1/2. Functionally, catalyzes the reversible reaction in which hydroxymethyl group from 5,10-methylenetetrahydrofolate is transferred onto alpha-ketoisovalerate to form ketopantoate. The sequence is that of 3-methyl-2-oxobutanoate hydroxymethyltransferase from Gloeobacter violaceus (strain ATCC 29082 / PCC 7421).